A 139-amino-acid polypeptide reads, in one-letter code: Protein shisa-5 (139 aa).

The chain crosses the membrane as a helical span at residues 3–23 (FGTLVAIGVIVFAVVVITIIL).

This sequence belongs to the shisa family.

It is found in the endoplasmic reticulum membrane. The protein localises to the nucleus membrane. In terms of biological role, can induce apoptosis in a caspase-dependent manner and plays a role in p53/TP53-dependent apoptosis. The sequence is that of Protein shisa-5 (Shisa5) from Gallus gallus (Chicken).